The primary structure comprises 506 residues: Cobyric acid synthase (506 aa).

The 198-residue stretch at 251 to 448 folds into the GATase cobBQ-type domain; that stretch reads DITIAIVQLP…LHGLFDSDAF (198 aa). The Nucleophile role is filled by C332. H440 is a catalytic residue.

Belongs to the CobB/CobQ family. CobQ subfamily.

The protein operates within cofactor biosynthesis; adenosylcobalamin biosynthesis. Catalyzes amidations at positions B, D, E, and G on adenosylcobyrinic A,C-diamide. NH(2) groups are provided by glutamine, and one molecule of ATP is hydrogenolyzed for each amidation. The polypeptide is Cobyric acid synthase (Salmonella dublin (strain CT_02021853)).